We begin with the raw amino-acid sequence, 547 residues long: ATP synthase subunit beta, mitochondrial (547 aa).

The transit peptide at 1–45 directs the protein to the mitochondrion; sequence MASRRLLSSFLRSSTRRSLRPSFSNPRPSFLTSYCSSPASILRRY. Low complexity predominate over residues 52–62; that stretch reads KEPAASKPAGT. A disordered region spans residues 52–74; that stretch reads KEPAASKPAGTAGTGKGTITDEK. 226 to 233 is a binding site for ATP; it reads GGDWVGKT.

Belongs to the ATPase alpha/beta chains family. As to quaternary structure, F-type ATPases have 2 components, CF(1) - the catalytic core - and CF(0) - the membrane proton channel. CF(1) has five subunits: alpha(3), beta(3), gamma(1), delta(1), epsilon(1). CF(0) has three main subunits: a, b and c.

It localises to the mitochondrion. The protein resides in the mitochondrion inner membrane. It carries out the reaction ATP + H2O + 4 H(+)(in) = ADP + phosphate + 5 H(+)(out). In terms of biological role, mitochondrial membrane ATP synthase (F(1)F(0) ATP synthase or Complex V) produces ATP from ADP in the presence of a proton gradient across the membrane which is generated by electron transport complexes of the respiratory chain. F-type ATPases consist of two structural domains, F(1) - containing the extramembraneous catalytic core, and F(0) - containing the membrane proton channel, linked together by a central stalk and a peripheral stalk. During catalysis, ATP synthesis in the catalytic domain of F(1) is coupled via a rotary mechanism of the central stalk subunits to proton translocation. Subunits alpha and beta form the catalytic core in F(1). Rotation of the central stalk against the surrounding alpha(3)beta(3) subunits leads to hydrolysis of ATP in three separate catalytic sites on the beta subunits. The polypeptide is ATP synthase subunit beta, mitochondrial (ATPB) (Daucus carota (Wild carrot)).